The primary structure comprises 131 residues: MKKHGVLNSEIAAVLASLGHTDTVVIADCGLPIPDGVKRIDLAVEIGKPSFLEVLQVVADDMAIEKVTLAEEVIINNAEVNKEIERKLIEPAFEYVSHEQFKEHTKKAKAIIRTGEATPYANVILHAGVIF.

The active-site Proton donor is histidine 20. Residues aspartate 28, histidine 98, and 120–122 (YAN) contribute to the substrate site.

The protein belongs to the RbsD / FucU family. RbsD subfamily. As to quaternary structure, homodecamer.

It localises to the cytoplasm. It carries out the reaction beta-D-ribopyranose = beta-D-ribofuranose. Its pathway is carbohydrate metabolism; D-ribose degradation; D-ribose 5-phosphate from beta-D-ribopyranose: step 1/2. In terms of biological role, catalyzes the interconversion of beta-pyran and beta-furan forms of D-ribose. This is D-ribose pyranase from Bacillus cereus (strain ATCC 14579 / DSM 31 / CCUG 7414 / JCM 2152 / NBRC 15305 / NCIMB 9373 / NCTC 2599 / NRRL B-3711).